The following is a 113-amino-acid chain: TYRO protein tyrosine kinase-binding protein (113 aa).

The N-terminal stretch at Met1–Ala27 is a signal peptide. Over Gln28 to Pro40 the chain is Extracellular. A helical transmembrane segment spans residues Gly41 to Val61. A Ca(2+)-binding site is contributed by Asp50. Residues Tyr62–Lys113 are Cytoplasmic-facing. Positions Ala75–Lys113 are disordered. The region spanning Arg80–Gln108 is the ITAM domain. The span at Thr87 to Lys113 shows a compositional bias: polar residues. Phosphotyrosine is present on residues Tyr91 and Tyr102.

Belongs to the TYROBP family. As to quaternary structure, homodimer; disulfide-linked. Homotrimer; disulfide-linked. Homotetramer; disulfide-linked. Homotrimers and homotetramers form when low levels of partner receptors are available and is competitive with assembly with interacting receptors. They may represent alternative oligomerization states or may be intermediates in the receptor assembly process. Binding of a metal cation aids in homooligomerization through coordination of the metal ion by the subunits of the oligomer. Interacts with TREM1. Interacts with TREM2. Interacts with CLECSF5. Interacts with CD300LB and CD300C2. Interacts with CD300E. Interacts (via ITAM domain) with SYK (via SH2 domains); activates SYK mediating neutrophils and macrophages integrin-mediated activation. Interacts with KLRC2. Interacts with CD300H. Interacts with KLRD1. In terms of processing, following ligand binding by associated receptors, tyrosine phosphorylated in the ITAM domain which leads to activation of additional tyrosine kinases and subsequent cell activation.

The protein localises to the cell membrane. Adapter protein which non-covalently associates with activating receptors found on the surface of a variety of immune cells to mediate signaling and cell activation following ligand binding by the receptors. TYROBP is tyrosine-phosphorylated in the ITAM domain following ligand binding by the associated receptors which leads to activation of additional tyrosine kinases and subsequent cell activation. Also has an inhibitory role in some cells. Non-covalently associates with activating receptors of the CD300 family to mediate cell activation. Also mediates cell activation through association with activating receptors of the CD200R family. Required for neutrophil activation mediated by integrin. Required for the activation of myeloid cells mediated by the CLEC5A/MDL1 receptor. Associates with natural killer (NK) cell receptors such as the KLRD1/KLRC2 heterodimer to mediate NK cell activation. Associates with TREM1 to mediate activation of neutrophils and monocytes. Associates with TREM2 on monocyte-derived dendritic cells to mediate up-regulation of chemokine receptor CCR7 and dendritic cell maturation and survival. Association with TREM2 mediates cytokine-induced formation of multinucleated giant cells which are formed by the fusion of macrophages. Stabilizes the TREM2 C-terminal fragment (TREM2-CTF) produced by TREM2 ectodomain shedding which suppresses the release of pro-inflammatory cytokines. In microglia, required with TREM2 for phagocytosis of apoptotic neurons. Required with ITGAM/CD11B in microglia to control production of microglial superoxide ions which promote the neuronal apoptosis that occurs during brain development. Promotes pro-inflammatory responses in microglia following nerve injury which accelerates degeneration of injured neurons. Positively regulates the expression of the IRAK3/IRAK-M kinase and IL10 production by liver dendritic cells and inhibits their T cell allosimulatory ability. Negatively regulates B cell proliferation. Required for CSF1-mediated osteoclast cytoskeletal organization. Positively regulates multinucleation during osteoclast development. This Macaca mulatta (Rhesus macaque) protein is TYRO protein tyrosine kinase-binding protein.